We begin with the raw amino-acid sequence, 1198 residues long: Fibronectin type-III domain-containing protein 3a (1198 aa).

A compositionally biased stretch (basic and acidic residues) spans 189–201; the sequence is KLKDRHGTQKDKL. Residues 189–256 form a disordered region; the sequence is KLKDRHGTQK…SQTDVEIEEK (68 aa). Residues 229-247 show a composition bias toward low complexity; that stretch reads GISTGSTKSKSVGKGKSNS. Fibronectin type-III domains follow at residues 269–370, 374–466, 470–563, 567–661, 665–758, 762–852, 864–951, 952–1045, and 1046–1151; these read NIAK…TMSC, APNL…TSGT, TPAS…TCPD, APSK…TPAV, PCQP…TAPG, QCKP…TPAS, SEDE…TKPL, PPDP…TPKS, and VPAA…TEPP. A disordered region spans residues 553–574; the sequence is SETVDYTTCPDKPGAPSKPSVK. The chain crosses the membrane as a helical span at residues 1172–1192; the sequence is VCAAVILALFAIFSILIAVII.

It belongs to the FNDC3 family.

The protein resides in the golgi apparatus membrane. This is Fibronectin type-III domain-containing protein 3a (FNDC3A) from Gallus gallus (Chicken).